A 484-amino-acid polypeptide reads, in one-letter code: FAD-dependent monooxygenase aurC (484 aa).

Residues 1 to 21 (MGAYSFRVIIVGGSITGMTLA) form the signal peptide. The FAD site is built by Glu-35, Gly-49, and Arg-108. Residue Tyr-216 is part of the active site. FAD is bound by residues Asp-308 and Gly-321. The chain crosses the membrane as a helical span at residues 451-471 (FAVASLIVLIVVLARALDSPA).

It belongs to the paxM FAD-dependent monooxygenase family. Requires FAD as cofactor.

Its subcellular location is the membrane. It participates in polyketide biosynthesis. FAD-dependent monooxygenase; part of the gene cluster that mediates the biosynthesis of aurovertins, fungal polyketides that exhibit potent inhibition of adenosine triphosphate synthase. Tha biosynthesis starts with the HR-PKS aurA that selects propionate as the starter unit; synthesizes a hexa-ene chain through the repeated functions of the KR and DH domains in the first six iterations; selectively introduces three alpha-methyl substitutions at C4, C6, and C16 using the S-adensylmethionine-dependent cMET; and shuts off KR and DH in the last three iterations to afford a 1,3,5-triketo portion that can undergo intramolecular cyclization to yield the alpha-pyrone intermediate. AurE may act as a cyclase and enhances the rate of pyrone formation and product release of aurA. The methyltransferase aurB then methylates the C17 hydroxyl group. C17 methylation is required to initiate epoxidation by the downstream monooxygenase aurC. The monooxygenase aurC and the epoxide hydrolase aurD can iteratively transform the terminal triene portion of the methylated precursor into the dioxabicyclo[3.2.1]octane scaffold of aurovertin E. Epoxidation modifications of the precursor occur in two separate steps; bis-epoxidation of the two terminal olefins takes place first, followed by another epoxidation that occurs at C7-C8 after tetrahydrofuran formation. The O-acyltransferase aurG converts aurovertin E to aurovertin A. This is FAD-dependent monooxygenase aurC from Calcarisporium arbuscula (Dendryphion arbuscula).